Here is a 568-residue protein sequence, read N- to C-terminus: DNA mismatch repair protein MutL (568 aa).

It belongs to the DNA mismatch repair MutL/HexB family.

Its function is as follows. This protein is involved in the repair of mismatches in DNA. It is required for dam-dependent methyl-directed DNA mismatch repair. May act as a 'molecular matchmaker', a protein that promotes the formation of a stable complex between two or more DNA-binding proteins in an ATP-dependent manner without itself being part of a final effector complex. This chain is DNA mismatch repair protein MutL, found in Thermosipho africanus (strain TCF52B).